Consider the following 545-residue polypeptide: CTP synthase (545 aa).

The tract at residues 1-266 (MTTKYIFVTG…DSYFTERFGL (266 aa)) is amidoligase domain. Ser14 contributes to the CTP binding site. Residue Ser14 participates in UTP binding. ATP contacts are provided by residues 15 to 20 (SLGKGI) and Asp72. Mg(2+)-binding residues include Asp72 and Glu140. Residues 147-149 (DIE), 187-192 (KTKPTQ), and Lys223 each bind CTP. UTP is bound by residues 187–192 (KTKPTQ) and Lys223. ATP is bound at residue 239–241 (KDV). One can recognise a Glutamine amidotransferase type-1 domain in the interval 291-542 (TIGMVGKYVS…VKAAGEYQKR (252 aa)). Gly352 contacts L-glutamine. The active-site Nucleophile; for glutamine hydrolysis is Cys379. Residues 380 to 383 (LGMQ), Glu403, and Arg470 contribute to the L-glutamine site. Residues His515 and Glu517 contribute to the active site.

This sequence belongs to the CTP synthase family. In terms of assembly, homotetramer.

The catalysed reaction is UTP + L-glutamine + ATP + H2O = CTP + L-glutamate + ADP + phosphate + 2 H(+). It carries out the reaction L-glutamine + H2O = L-glutamate + NH4(+). The enzyme catalyses UTP + NH4(+) + ATP = CTP + ADP + phosphate + 2 H(+). It functions in the pathway pyrimidine metabolism; CTP biosynthesis via de novo pathway; CTP from UDP: step 2/2. Allosterically activated by GTP, when glutamine is the substrate; GTP has no effect on the reaction when ammonia is the substrate. The allosteric effector GTP functions by stabilizing the protein conformation that binds the tetrahedral intermediate(s) formed during glutamine hydrolysis. Inhibited by the product CTP, via allosteric rather than competitive inhibition. Catalyzes the ATP-dependent amination of UTP to CTP with either L-glutamine or ammonia as the source of nitrogen. Regulates intracellular CTP levels through interactions with the four ribonucleotide triphosphates. This Aeromonas hydrophila subsp. hydrophila (strain ATCC 7966 / DSM 30187 / BCRC 13018 / CCUG 14551 / JCM 1027 / KCTC 2358 / NCIMB 9240 / NCTC 8049) protein is CTP synthase.